A 485-amino-acid polypeptide reads, in one-letter code: GTPase Der (485 aa).

EngA-type G domains lie at 3 to 167 (PTIA…PEPE) and 176 to 349 (PVFA…NAAM). GTP contacts are provided by residues 9-16 (GRPNVGKS), 56-60 (DTGGF), 119-122 (NKGE), 182-189 (GRPNVGKS), 229-233 (DTAGV), and 294-297 (NKWD). A KH-like domain is found at 350–434 (IKMPTPKITR…PLRIQYNVSE (85 aa)). Positions 435-485 (NPYENAEDKPKKKPLRRVSLSNRIEKREGRKEEKNRFKKKTKVSVKKQFSK) are disordered. Basic and acidic residues predominate over residues 457–469 (RIEKREGRKEEKN). A compositionally biased stretch (basic residues) spans 470-485 (RFKKKTKVSVKKQFSK).

The protein belongs to the TRAFAC class TrmE-Era-EngA-EngB-Septin-like GTPase superfamily. EngA (Der) GTPase family. As to quaternary structure, associates with the 50S ribosomal subunit.

In terms of biological role, GTPase that plays an essential role in the late steps of ribosome biogenesis. The sequence is that of GTPase Der from Neisseria meningitidis serogroup C / serotype 2a (strain ATCC 700532 / DSM 15464 / FAM18).